Reading from the N-terminus, the 148-residue chain is Nucleoside diphosphate kinase (148 aa).

6 residues coordinate ATP: Lys-9, Phe-57, Arg-85, Thr-91, Arg-102, and Asn-112. His-115 functions as the Pros-phosphohistidine intermediate in the catalytic mechanism.

This sequence belongs to the NDK family. In terms of assembly, homotetramer. Requires Mg(2+) as cofactor.

The protein resides in the cytoplasm. The catalysed reaction is a 2'-deoxyribonucleoside 5'-diphosphate + ATP = a 2'-deoxyribonucleoside 5'-triphosphate + ADP. It catalyses the reaction a ribonucleoside 5'-diphosphate + ATP = a ribonucleoside 5'-triphosphate + ADP. Functionally, major role in the synthesis of nucleoside triphosphates other than ATP. The ATP gamma phosphate is transferred to the NDP beta phosphate via a ping-pong mechanism, using a phosphorylated active-site intermediate. The sequence is that of Nucleoside diphosphate kinase from Macrococcus caseolyticus (strain JCSC5402) (Macrococcoides caseolyticum).